The chain runs to 562 residues: Pentatricopeptide repeat-containing protein At3g22670, mitochondrial (562 aa).

A mitochondrion-targeting transit peptide spans 1-31 (MLTKLRISKLVSYTLPRRIFQRRFLVTNNTA). PPR repeat units lie at residues 165 to 199 (SGHT…EESK), 202 to 232 (TLDT…MEKS), 238 to 268 (DTIA…LFDT), 272 to 306 (DART…EFTP), 307 to 341 (DVVT…GCNP), 342 to 376 (NVVT…GCVP), 377 to 411 (DAKF…GVRR), 412 to 446 (DVLV…EGES), 450 to 484 (NVET…DVSI), and 485 to 519 (DVST…GMVP).

It belongs to the PPR family. P subfamily.

Its subcellular location is the mitochondrion. This chain is Pentatricopeptide repeat-containing protein At3g22670, mitochondrial, found in Arabidopsis thaliana (Mouse-ear cress).